The chain runs to 145 residues: Large ribosomal subunit protein uL13 (145 aa).

Belongs to the universal ribosomal protein uL13 family. As to quaternary structure, part of the 50S ribosomal subunit.

Its function is as follows. This protein is one of the early assembly proteins of the 50S ribosomal subunit, although it is not seen to bind rRNA by itself. It is important during the early stages of 50S assembly. In Bacillus licheniformis (strain ATCC 14580 / DSM 13 / JCM 2505 / CCUG 7422 / NBRC 12200 / NCIMB 9375 / NCTC 10341 / NRRL NRS-1264 / Gibson 46), this protein is Large ribosomal subunit protein uL13.